We begin with the raw amino-acid sequence, 252 residues long: 1-(5-phosphoribosyl)-5-[(5-phosphoribosylamino)methylideneamino] imidazole-4-carboxamide isomerase (252 aa).

Asp8 (proton acceptor) is an active-site residue. The active-site Proton donor is Asp129.

Belongs to the HisA/HisF family.

The protein resides in the cytoplasm. The catalysed reaction is 1-(5-phospho-beta-D-ribosyl)-5-[(5-phospho-beta-D-ribosylamino)methylideneamino]imidazole-4-carboxamide = 5-[(5-phospho-1-deoxy-D-ribulos-1-ylimino)methylamino]-1-(5-phospho-beta-D-ribosyl)imidazole-4-carboxamide. The protein operates within amino-acid biosynthesis; L-histidine biosynthesis; L-histidine from 5-phospho-alpha-D-ribose 1-diphosphate: step 4/9. This is 1-(5-phosphoribosyl)-5-[(5-phosphoribosylamino)methylideneamino] imidazole-4-carboxamide isomerase from Synechococcus sp. (strain RCC307).